A 1801-amino-acid polypeptide reads, in one-letter code: U3 small nucleolar RNA-associated protein 10 (1801 aa).

The next 2 helical transmembrane spans lie at Leu-102 to Ile-122 and Ile-136 to Pro-156. An HEAT 1 repeat occupies Asp-581 to Lys-619. Transmembrane regions (helical) follow at residues Ile-939 to Asn-959 and Ala-995 to Met-1015. 5 HEAT repeats span residues Asp-1038 to His-1076, Tyr-1110 to Lys-1148, Thr-1244 to Glu-1282, Gln-1288 to Lys-1327, and Leu-1756 to Glu-1794.

It belongs to the HEATR1/UTP10 family. As to quaternary structure, component of the ribosomal small subunit (SSU) processome.

It localises to the nucleus. The protein resides in the nucleolus. Its subcellular location is the membrane. Involved in nucleolar processing of pre-18S ribosomal RNA. Involved in ribosome biosynthesis. The chain is U3 small nucleolar RNA-associated protein 10 from Emericella nidulans (strain FGSC A4 / ATCC 38163 / CBS 112.46 / NRRL 194 / M139) (Aspergillus nidulans).